The following is a 218-amino-acid chain: Small ribosomal subunit protein uS3 (218 aa).

The KH type-2 domain maps to 38-106 (IREYISKRLS…RVHINILEIK (69 aa)).

It belongs to the universal ribosomal protein uS3 family. Part of the 30S ribosomal subunit. Forms a tight complex with proteins S10 and S14.

Its function is as follows. Binds the lower part of the 30S subunit head. Binds mRNA in the 70S ribosome, positioning it for translation. The chain is Small ribosomal subunit protein uS3 from Bacillus subtilis (strain 168).